We begin with the raw amino-acid sequence, 62 residues long: DNA gyrase inhibitor YacG (62 aa).

The Zn(2+) site is built by C9, C12, C27, and C31. Over residues 43 to 52 (GYRIPGEKAP) the composition is skewed to basic and acidic residues. Residues 43 to 62 (GYRIPGEKAPESGGEEPGDE) form a disordered region.

Belongs to the DNA gyrase inhibitor YacG family. Interacts with GyrB. It depends on Zn(2+) as a cofactor.

In terms of biological role, inhibits all the catalytic activities of DNA gyrase by preventing its interaction with DNA. Acts by binding directly to the C-terminal domain of GyrB, which probably disrupts DNA binding by the gyrase. This Geobacter sp. (strain M21) protein is DNA gyrase inhibitor YacG.